Reading from the N-terminus, the 1085-residue chain is Ankyrin repeat and IBR domain-containing protein 1 (1085 aa).

Gly-2 carries the N-myristoyl glycine lipid modification. ANK repeat units follow at residues 45–75 (QHNTPLHYAARHGMNRILGTFLFGRDGNPNK) and 145–174 (KKNTPLHYAAASGMKACVELLVKHGGDLFA). The disordered stretch occupies residues 282 to 322 (CQRSGVQMPTPPPSGYNAWDTLPSPRTPRTTRSSVTSPDEI). Low complexity predominate over residues 304 to 319 (PSPRTPRTTRSSVTSP). The tract at residues 330 to 570 (DTSLCDICMC…GGYYRCTRYE (241 aa)) is TRIAD supradomain. 14 residues coordinate Zn(2+): Cys-334, Cys-337, Cys-352, His-354, Cys-357, Cys-360, Cys-379, Cys-384, Cys-466, Cys-469, His-474, Cys-479, Cys-520, and Cys-523. An RING-type 1 zinc finger spans residues 334–384 (CDICMCSISVFEDPVDMPCGHDFCRGCWEAFLNLKIQEGEAHNIFCPAYEC). An IBR-type zinc finger spans residues 402 to 479 (DKRYLQFDIK…LGEAHEPCDC (78 aa)). Residues 520-549 (CANCKSPIQKNEGCNHMQCAKCKYDFCWIC) form an RING-type 2; atypical zinc finger. The active site involves Cys-533. The Zn(2+) site is built by Cys-538, Cys-541, Cys-546, Cys-549, His-556, and Cys-566. Residues 576–641 (EEQSKEMTVE…RALKETEGGC (66 aa)) adopt a coiled-coil conformation. Position 738 is a phosphoserine (Ser-738). The disordered stretch occupies residues 764 to 808 (RRRHRQQRRRGDVHSLLSNPTDLDEPSESTFDLPEGSSGRRPGAS). Residues 846-865 (EDDPNILLAIQLSLQESGLD) form the UIM domain. Phosphoserine is present on residues Ser-879 and Ser-906. 3 disordered regions span residues 884-907 (GSSLPSRLDSVPRSTESPRAALSS), 921-959 (GADSDPFSTDTLSSRPLSETRSDFCPSSSDLDSAGQDPS), and 1014-1085 (PPED…VHSV). Residues 926–959 (PFSTDTLSSRPLSETRSDFCPSSSDLDSAGQDPS) show a composition bias toward polar residues. Positions 1018-1033 (SVSKDTGVHEGERAQM) are enriched in basic and acidic residues. Residues 1068 to 1085 (ASQTPQTSSDWLEQVHSV) show a composition bias toward polar residues.

The protein belongs to the RBR family.

It carries out the reaction [E2 ubiquitin-conjugating enzyme]-S-ubiquitinyl-L-cysteine + [acceptor protein]-L-lysine = [E2 ubiquitin-conjugating enzyme]-L-cysteine + [acceptor protein]-N(6)-ubiquitinyl-L-lysine.. Might act as an E3 ubiquitin-protein ligase, or as part of E3 complex, which accepts ubiquitin from specific E2 ubiquitin-conjugating enzymes and then transfers it to substrates. This Mus musculus (Mouse) protein is Ankyrin repeat and IBR domain-containing protein 1 (Ankib1).